The chain runs to 919 residues: Plasma membrane ATPase 1 (919 aa).

Residues 1–16 show a composition bias toward basic and acidic residues; the sequence is MADNAGEYHDAEKHAP. Residues 1–73 form a disordered region; the sequence is MADNAGEYHD…APAAGEAKAV (73 aa). The Cytoplasmic portion of the chain corresponds to 1-113; that stretch reads MADNAGEYHD…KEELENPFLK (113 aa). Acidic residues predominate over residues 34–63; sequence QDDEPDDDIDALIEELFSEDVQEEQEDNDD. Ser89 carries the phosphoserine modification. A helical transmembrane segment spans residues 114 to 134; the sequence is FIMFFVGPIQFVMEMAAALAA. Residues 135-138 are Extracellular-facing; sequence GLRD. The chain crosses the membrane as a helical span at residues 139–158; the sequence is WVDFGVICALLMLNAVVGFV. Residues 159–289 lie on the Cytoplasmic side of the membrane; that stretch reads QEYQAGSIVD…GTGHFTEVLN (131 aa). Residues 290–311 form a helical membrane-spanning segment; the sequence is GIGTILLVLVLLTLFCIYTAAF. Topologically, residues 312–322 are extracellular; sequence YRSVRLARLLE. The helical transmembrane segment at 323-345 threads the bilayer; the sequence is YTLAITIIGVPVGLPAVVTTTMA. Residues 346–717 lie on the Cytoplasmic side of the membrane; sequence VGAAYLAEKQ…LIIRNQLLNL (372 aa). Catalysis depends on Asp376, which acts as the 4-aspartylphosphate intermediate. At Ser494 the chain carries Phosphoserine. Mg(2+) is bound by residues Asp632 and Asp636. A helical membrane pass occupies residues 718–736; that stretch reads ELVVFIAIFADVATLAIAY. Over 737 to 752 the chain is Extracellular; sequence DNAPYSMKPVKWNLPR. The helical transmembrane segment at 753–772 threads the bilayer; sequence LWGLSTVIGIVLAIGTWITN. Residues 773–824 lie on the Cytoplasmic side of the membrane; the sequence is TTMIAQGQNRGIVQNFGVQDEVLFLEISLTENWLIFVTRCNGPFWSSIPSWQ. The chain crosses the membrane as a helical span at residues 825–845; the sequence is LSGAVLAVDILATMFCIFGWF. The Extracellular portion of the chain corresponds to 846–858; the sequence is KGGHQTSIVAVLR. Residues 859–875 form a helical membrane-spanning segment; the sequence is IWMYSFGIFCIMAGTYY. The Cytoplasmic segment spans residues 876–919; the sequence is ILSESAGFDRMMNGKPKESRNQRSIEDLVVALQRTSTRHEKGDA. Ser899 is modified (phosphoserine).

This sequence belongs to the cation transport ATPase (P-type) (TC 3.A.3) family. Type IIIA subfamily.

It is found in the cell membrane. It carries out the reaction ATP + H2O + H(+)(in) = ADP + phosphate + 2 H(+)(out). The plasma membrane ATPase of plants and fungi is a hydrogen ion pump. The proton gradient it generates drives the active transport of nutrients by H(+)-symport. The resulting external acidification and/or internal alkinization may mediate growth responses. The polypeptide is Plasma membrane ATPase 1 (pma1) (Schizosaccharomyces pombe (strain 972 / ATCC 24843) (Fission yeast)).